The sequence spans 394 residues: Elongation factor Tu (394 aa).

The region spanning 10–204 (KEHANIGTIG…AVDTYIPTPE (195 aa)) is the tr-type G domain. The interval 19 to 26 (GHVDHGKT) is G1. 19 to 26 (GHVDHGKT) contributes to the GTP binding site. Mg(2+) is bound at residue T26. The interval 60–64 (GITIN) is G2. The tract at residues 81–84 (DCPG) is G3. Residues 81-85 (DCPGH) and 136-139 (NKVD) each bind GTP. Positions 136 to 139 (NKVD) are G4. Residues 174-176 (SAL) are G5.

It belongs to the TRAFAC class translation factor GTPase superfamily. Classic translation factor GTPase family. EF-Tu/EF-1A subfamily. As to quaternary structure, monomer.

It localises to the cytoplasm. It catalyses the reaction GTP + H2O = GDP + phosphate + H(+). Functionally, GTP hydrolase that promotes the GTP-dependent binding of aminoacyl-tRNA to the A-site of ribosomes during protein biosynthesis. This chain is Elongation factor Tu, found in Staphylococcus aureus (strain COL).